The chain runs to 304 residues: tRNA pseudouridine synthase B (304 aa).

The active-site Nucleophile is the aspartate 47. The interval 85–105 (TNTDDGEGEVTETSDARPSDD) is disordered.

It belongs to the pseudouridine synthase TruB family. Type 1 subfamily.

It carries out the reaction uridine(55) in tRNA = pseudouridine(55) in tRNA. Functionally, responsible for synthesis of pseudouridine from uracil-55 in the psi GC loop of transfer RNAs. In Dinoroseobacter shibae (strain DSM 16493 / NCIMB 14021 / DFL 12), this protein is tRNA pseudouridine synthase B.